A 422-amino-acid polypeptide reads, in one-letter code: UDP-N-acetylglucosamine 1-carboxyvinyltransferase (422 aa).

Position 22–23 (22–23) interacts with phosphoenolpyruvate; that stretch reads KN. Arg-94 lines the UDP-N-acetyl-alpha-D-glucosamine pocket. The active-site Proton donor is Cys-118. Cys-118 is modified (2-(S-cysteinyl)pyruvic acid O-phosphothioketal). UDP-N-acetyl-alpha-D-glucosamine-binding positions include 123-127, 163-166, Asp-308, and Ile-330; these read RPVDL and KVSV.

It belongs to the EPSP synthase family. MurA subfamily.

It is found in the cytoplasm. The catalysed reaction is phosphoenolpyruvate + UDP-N-acetyl-alpha-D-glucosamine = UDP-N-acetyl-3-O-(1-carboxyvinyl)-alpha-D-glucosamine + phosphate. It functions in the pathway cell wall biogenesis; peptidoglycan biosynthesis. Cell wall formation. Adds enolpyruvyl to UDP-N-acetylglucosamine. The sequence is that of UDP-N-acetylglucosamine 1-carboxyvinyltransferase from Yersinia enterocolitica serotype O:8 / biotype 1B (strain NCTC 13174 / 8081).